We begin with the raw amino-acid sequence, 757 residues long: Elongation factor G, mitochondrial (757 aa).

One can recognise a tr-type G domain in the interval 66-344; the sequence is DRMRNIGISA…VLDYLPCPME (279 aa). Residues 75-82, 142-146, and 196-199 contribute to the GTP site; these read AHIDSGKT, DTPGH, and NKLD.

This sequence belongs to the TRAFAC class translation factor GTPase superfamily. Classic translation factor GTPase family. EF-G/EF-2 subfamily.

Its subcellular location is the mitochondrion. It functions in the pathway protein biosynthesis; polypeptide chain elongation. Functionally, mitochondrial GTPase that catalyzes the GTP-dependent ribosomal translocation step during translation elongation. During this step, the ribosome changes from the pre-translocational (PRE) to the post-translocational (POST) state as the newly formed A-site-bound peptidyl-tRNA and P-site-bound deacylated tRNA move to the P and E sites, respectively. Catalyzes the coordinated movement of the two tRNA molecules, the mRNA and conformational changes in the ribosome. In Oryza sativa subsp. japonica (Rice), this protein is Elongation factor G, mitochondrial.